Here is a 462-residue protein sequence, read N- to C-terminus: Probable peptidoglycan glycosyltransferase FtsW (462 aa).

The tract at residues 1-28 (MREPRHVPQLRASGRRFPQRGRRHRFGK) is disordered. Over 1–92 (MREPRHVPQL…RSRMLDFDYS (92 aa)) the chain is Cytoplasmic. A compositionally biased stretch (basic residues) spans 13-27 (SGRRFPQRGRRHRFG). The helical transmembrane segment at 93–113 (LLWVSIALLGLGVVMVYSASI) threads the bilayer. The Periplasmic portion of the chain corresponds to 114 to 127 (AMPDSPKYASYHDY). Residues 128–148 (AFLLRHCVSLVVAFVAAVIAF) traverse the membrane as a helical segment. The Cytoplasmic segment spans residues 149-158 (RVPVSTWDKY). Residues 159-179 (APHLFLIALVGLVIVLIPHIG) traverse the membrane as a helical segment. Topologically, residues 180–192 (KGVNGARRWIPLG) are periplasmic. A helical membrane pass occupies residues 193–215 (ITNMQPSEIMKLAVTIYAANYTV). Residues 216 to 223 (RKQEYMQS) are Cytoplasmic-facing. Residues 224-244 (FAKGFLPMAFAVGLVGALLLL) form a helical membrane-spanning segment. The Periplasmic portion of the chain corresponds to 245-247 (EPD). Residues 248 to 268 (MGAFMVVAAIAMGVLFLGGVN) form a helical membrane-spanning segment. Residues 269–270 (GK) are Cytoplasmic-facing. Residues 271-291 (LFGGLVATAVGTFTMLVWLSP) form a helical membrane-spanning segment. At 292–349 (WRRERIFAYLDPWDERYAQGKAYQLTHSLIAFGRGEWFGVGLGGSVEKLNYLPEAHTD) the chain is on the periplasmic side. The chain crosses the membrane as a helical span at residues 350-370 (FILAVIGEELGFVGVLVVILL). Over 371–398 (FYWIVRRSFEIGRQALALDRTFAGLMAK) the chain is Cytoplasmic. A helical membrane pass occupies residues 399–419 (GVGIWFGAQAFINMGVNLGLL). At 420–425 (PTKGLT) the chain is on the periplasmic side. Residues 426–446 (LPLVSYGGSGILLNCISLAVL) form a helical membrane-spanning segment. At 447 to 462 (LRVDYENRVLMRGGKV) the chain is on the cytoplasmic side.

This sequence belongs to the SEDS family. FtsW subfamily.

The protein resides in the cell inner membrane. The catalysed reaction is [GlcNAc-(1-&gt;4)-Mur2Ac(oyl-L-Ala-gamma-D-Glu-L-Lys-D-Ala-D-Ala)](n)-di-trans,octa-cis-undecaprenyl diphosphate + beta-D-GlcNAc-(1-&gt;4)-Mur2Ac(oyl-L-Ala-gamma-D-Glu-L-Lys-D-Ala-D-Ala)-di-trans,octa-cis-undecaprenyl diphosphate = [GlcNAc-(1-&gt;4)-Mur2Ac(oyl-L-Ala-gamma-D-Glu-L-Lys-D-Ala-D-Ala)](n+1)-di-trans,octa-cis-undecaprenyl diphosphate + di-trans,octa-cis-undecaprenyl diphosphate + H(+). It functions in the pathway cell wall biogenesis; peptidoglycan biosynthesis. Functionally, peptidoglycan polymerase that is essential for cell division. The protein is Probable peptidoglycan glycosyltransferase FtsW of Burkholderia thailandensis (strain ATCC 700388 / DSM 13276 / CCUG 48851 / CIP 106301 / E264).